A 291-amino-acid chain; its full sequence is Probable alpha-L-glutamate ligase (291 aa).

The ATP-grasp domain maps to 104–287; sequence HQLLASQGID…VAGTIIQHLE (184 aa). ATP is bound by residues lysine 141, 178 to 179, aspartate 187, and 211 to 213; these read EF and RSN. Mg(2+) is bound by residues aspartate 248, glutamate 260, and asparagine 262. Mn(2+) is bound by residues aspartate 248, glutamate 260, and asparagine 262.

The protein belongs to the RimK family. Mg(2+) serves as cofactor. Mn(2+) is required as a cofactor.

In Xanthomonas campestris pv. campestris (strain 8004), this protein is Probable alpha-L-glutamate ligase.